The primary structure comprises 142 residues: Putative pre-16S rRNA nuclease (142 aa).

The protein belongs to the YqgF nuclease family.

The protein resides in the cytoplasm. Could be a nuclease involved in processing of the 5'-end of pre-16S rRNA. The chain is Putative pre-16S rRNA nuclease from Lactobacillus delbrueckii subsp. bulgaricus (strain ATCC BAA-365 / Lb-18).